Here is a 333-residue protein sequence, read N- to C-terminus: NADH-quinone oxidoreductase subunit H (333 aa).

8 consecutive transmembrane segments (helical) span residues 17-37 (VIQAIVILLVVVLVAALMSFI), 91-111 (VAMATAVLSFIVIPVSPTLGV), 116-136 (IGLLFFMAMAGIAVYAVLFGG), 156-176 (ISYEVFLGISLMGVVAIAGSF), 188-208 (MWFIVPQFLGFMIFVVAGVAV), 244-264 (YVNIVLISALIVTLFFGGWLA), 272-292 (FIPPVFWFIVKTAFFVMMFVL), and 310-330 (WKVCLPLALVNLMVTGAVILM).

This sequence belongs to the complex I subunit 1 family. In terms of assembly, NDH-1 is composed of 14 different subunits. Subunits NuoA, H, J, K, L, M, N constitute the membrane sector of the complex.

The protein localises to the cell inner membrane. The catalysed reaction is a quinone + NADH + 5 H(+)(in) = a quinol + NAD(+) + 4 H(+)(out). Its function is as follows. NDH-1 shuttles electrons from NADH, via FMN and iron-sulfur (Fe-S) centers, to quinones in the respiratory chain. The immediate electron acceptor for the enzyme in this species is believed to be ubiquinone. Couples the redox reaction to proton translocation (for every two electrons transferred, four hydrogen ions are translocated across the cytoplasmic membrane), and thus conserves the redox energy in a proton gradient. This subunit may bind ubiquinone. In Acinetobacter baylyi (strain ATCC 33305 / BD413 / ADP1), this protein is NADH-quinone oxidoreductase subunit H.